Here is a 471-residue protein sequence, read N- to C-terminus: ATP synthase subunit beta (471 aa).

158–165 (GGAGCGKT) contributes to the ATP binding site.

This sequence belongs to the ATPase alpha/beta chains family. F-type ATPases have 2 components, CF(1) - the catalytic core - and CF(0) - the membrane proton channel. CF(1) has five subunits: alpha(3), beta(3), gamma(1), delta(1), epsilon(1). CF(0) has three main subunits: a(1), b(2) and c(9-12). The alpha and beta chains form an alternating ring which encloses part of the gamma chain. CF(1) is attached to CF(0) by a central stalk formed by the gamma and epsilon chains, while a peripheral stalk is formed by the delta and b chains.

It is found in the cell inner membrane. It catalyses the reaction ATP + H2O + 4 H(+)(in) = ADP + phosphate + 5 H(+)(out). In terms of biological role, produces ATP from ADP in the presence of a proton gradient across the membrane. The catalytic sites are hosted primarily by the beta subunits. This Desulfotalea psychrophila (strain LSv54 / DSM 12343) protein is ATP synthase subunit beta.